The following is a 249-amino-acid chain: uncharacterized protein (249 aa).

Positions 51-67 are enriched in polar residues; sequence IPKDSLTNGKSSKNCMS. Disordered regions lie at residues 51–131 and 205–240; these read IPKD…DSPV and YLNA…SSDG. Residues 93–106 are compositionally biased toward low complexity; sequence SFQSMNSSMSSSTQ. A compositionally biased stretch (basic and acidic residues) spans 110-129; that stretch reads RILDEKNKDQSSSNENDRDS.

It belongs to the asfivirus DP238L family.

This is an uncharacterized protein from African swine fever virus (isolate Tick/Malawi/Lil 20-1/1983) (ASFV).